The sequence spans 562 residues: NAD-dependent malic enzyme (562 aa).

Tyr101 acts as the Proton donor in catalysis. Arg154 serves as a coordination point for NAD(+). Catalysis depends on Lys172, which acts as the Proton acceptor. The a divalent metal cation site is built by Glu243, Asp244, and Asp267. NAD(+) contacts are provided by Asp267 and Asn415.

This sequence belongs to the malic enzymes family. In terms of assembly, homotetramer. Requires Mg(2+) as cofactor. It depends on Mn(2+) as a cofactor.

The enzyme catalyses (S)-malate + NAD(+) = pyruvate + CO2 + NADH. It catalyses the reaction oxaloacetate + H(+) = pyruvate + CO2. This is NAD-dependent malic enzyme from Shewanella halifaxensis (strain HAW-EB4).